We begin with the raw amino-acid sequence, 882 residues long: Putative HTH-type transcriptional regulator Rv0890c (882 aa).

In terms of domain architecture, HTH luxR-type spans 814 to 879 (PARGWGSLTP…QLVDEAARRG (66 aa)). A DNA-binding region (H-T-H motif) is located at residues 838–857 (NKDIAKRLFVSPRTVQTHLT).

The protein is Putative HTH-type transcriptional regulator Rv0890c of Mycobacterium tuberculosis (strain ATCC 25618 / H37Rv).